Reading from the N-terminus, the 351-residue chain is Dihydroorotate dehydrogenase (quinone) (351 aa).

FMN is bound by residues 67-71 (AGFDK) and Thr91. Lys71 is a substrate binding site. Position 116–120 (116–120 (NAMGF)) interacts with substrate. Asn145 and Asn178 together coordinate FMN. Asn178 serves as a coordination point for substrate. Ser181 serves as the catalytic Nucleophile. Asn183 is a binding site for substrate. 2 residues coordinate FMN: Lys214 and Thr242. Residue 243–244 (NT) participates in substrate binding. FMN contacts are provided by residues Gly262, Gly291, and 312-313 (YS).

It belongs to the dihydroorotate dehydrogenase family. Type 2 subfamily. Monomer. The cofactor is FMN.

It localises to the cell membrane. It catalyses the reaction (S)-dihydroorotate + a quinone = orotate + a quinol. It functions in the pathway pyrimidine metabolism; UMP biosynthesis via de novo pathway; orotate from (S)-dihydroorotate (quinone route): step 1/1. In terms of biological role, catalyzes the conversion of dihydroorotate to orotate with quinone as electron acceptor. The chain is Dihydroorotate dehydrogenase (quinone) from Helicobacter pylori (strain G27).